The chain runs to 662 residues: DNA ligase (662 aa).

Residues 31 to 35 (DYEYD), 80 to 81 (SL), and Glu-109 contribute to the NAD(+) site. The active-site N6-AMP-lysine intermediate is Lys-111. Arg-132, Glu-166, Lys-282, and Lys-306 together coordinate NAD(+). Positions 400, 403, 418, and 423 each coordinate Zn(2+). Residues 581–662 (KVNNIFEGKT…FEEMLKGENI (82 aa)) form the BRCT domain.

It belongs to the NAD-dependent DNA ligase family. LigA subfamily. Requires Mg(2+) as cofactor. Mn(2+) is required as a cofactor.

It carries out the reaction NAD(+) + (deoxyribonucleotide)n-3'-hydroxyl + 5'-phospho-(deoxyribonucleotide)m = (deoxyribonucleotide)n+m + AMP + beta-nicotinamide D-nucleotide.. DNA ligase that catalyzes the formation of phosphodiester linkages between 5'-phosphoryl and 3'-hydroxyl groups in double-stranded DNA using NAD as a coenzyme and as the energy source for the reaction. It is essential for DNA replication and repair of damaged DNA. This is DNA ligase from Thermoanaerobacter pseudethanolicus (strain ATCC 33223 / 39E) (Clostridium thermohydrosulfuricum).